Consider the following 449-residue polypeptide: Putative gustatory receptor 77a (449 aa).

The Cytoplasmic portion of the chain corresponds to 1-27 (MPLPLGDPLALAVSPQLGYIRITAMPR). Residues 28–50 (WLQLPGMSALGILYSLTRVFGLM) form a helical membrane-spanning segment. The Extracellular segment spans residues 51–70 (ATANWSPRGIKRVRQSLYLR). Residues 71–93 (IHGCVMLIFVGCFSPFAFWCIFQ) traverse the membrane as a helical segment. The Cytoplasmic segment spans residues 94 to 102 (RMAFLRQNR). A helical membrane pass occupies residues 103–125 (ILLMIGFNRYVLLLVCAFMTLWI). Topologically, residues 126–205 (HCFKQAEIIG…VRRNFMYACS (80 aa)) are extracellular. A helical transmembrane segment spans residues 206–228 (LVFVSVCQAILQLSLGMYTMAIL). Over 229-298 (FLGHLVRHSN…LLKLHRSICS (70 aa)) the chain is Cytoplasmic. The chain crosses the membrane as a helical span at residues 299-321 (LCAVQAVCFLGFVPLECTIHLFF). Topologically, residues 322–340 (TYFMKYSKFILRKYGRSFP) are extracellular. Residues 341–363 (LNYFAIAFLVGLFTNLLLVILPT) form a helical membrane-spanning segment. Residues 364 to 420 (YYSERRFNCTREIIKGGGLAFPSRITVKQLRHTMHFYGLYLKNVEHVFAVSACGLFK) are Cytoplasmic-facing. Residues 421–443 (LNNAILFCIVGAILEYLMILIQF) traverse the membrane as a helical segment. Residues 444–449 (DKVLNK) are Extracellular-facing.

This sequence belongs to the insect chemoreceptor superfamily. Gustatory receptor (GR) family. Gr77a subfamily. As to expression, in larvae, is expressed in dorsal pharyngeal sense organ.

The protein localises to the cell membrane. Its function is as follows. Probable gustatory receptor which mediates acceptance or avoidance behavior, depending on its substrates. The sequence is that of Putative gustatory receptor 77a (Gr77a) from Drosophila melanogaster (Fruit fly).